Reading from the N-terminus, the 878-residue chain is Alanine--tRNA ligase (878 aa).

4 residues coordinate Zn(2+): His562, His566, Cys670, and His674.

It belongs to the class-II aminoacyl-tRNA synthetase family. It depends on Zn(2+) as a cofactor.

It localises to the cytoplasm. It carries out the reaction tRNA(Ala) + L-alanine + ATP = L-alanyl-tRNA(Ala) + AMP + diphosphate. Functionally, catalyzes the attachment of alanine to tRNA(Ala) in a two-step reaction: alanine is first activated by ATP to form Ala-AMP and then transferred to the acceptor end of tRNA(Ala). Also edits incorrectly charged Ser-tRNA(Ala) and Gly-tRNA(Ala) via its editing domain. This chain is Alanine--tRNA ligase, found in Acinetobacter baumannii (strain ACICU).